Consider the following 242-residue polypeptide: MSKRRIAPLTFLRRLLLRILAALAVFWGGGIALFSVVPVPFSAVMAERQISAWLSGEFGYVAHSDWVSMADISPWMGLAVIAAEDQKFPEHWGFDVPAIEKALAHNERNESRIRGASTLSQQTAKNLFLWDGRSWVRKGLEAGLTLGIETVWSKKRILTVYLNIAEFGDGIFGVEAAAQRYFHKPASRLSMSEAALLAAVLPNPLRYKANAPSGYVRSRQAWIMRQMRQLGGESFMTRNQLN.

Residues 19-39 (ILAALAVFWGGGIALFSVVPV) form a helical membrane-spanning segment.

The protein belongs to the glycosyltransferase 51 family.

It localises to the cell inner membrane. It catalyses the reaction [GlcNAc-(1-&gt;4)-Mur2Ac(oyl-L-Ala-gamma-D-Glu-L-Lys-D-Ala-D-Ala)](n)-di-trans,octa-cis-undecaprenyl diphosphate + beta-D-GlcNAc-(1-&gt;4)-Mur2Ac(oyl-L-Ala-gamma-D-Glu-L-Lys-D-Ala-D-Ala)-di-trans,octa-cis-undecaprenyl diphosphate = [GlcNAc-(1-&gt;4)-Mur2Ac(oyl-L-Ala-gamma-D-Glu-L-Lys-D-Ala-D-Ala)](n+1)-di-trans,octa-cis-undecaprenyl diphosphate + di-trans,octa-cis-undecaprenyl diphosphate + H(+). The protein operates within cell wall biogenesis; peptidoglycan biosynthesis. Peptidoglycan polymerase that catalyzes glycan chain elongation from lipid-linked precursors. In Salmonella schwarzengrund (strain CVM19633), this protein is Biosynthetic peptidoglycan transglycosylase.